A 347-amino-acid chain; its full sequence is Phenylalanine--tRNA ligase alpha subunit (347 aa).

Glu262 provides a ligand contact to Mg(2+).

Belongs to the class-II aminoacyl-tRNA synthetase family. Phe-tRNA synthetase alpha subunit type 1 subfamily. Tetramer of two alpha and two beta subunits. Mg(2+) is required as a cofactor.

The protein localises to the cytoplasm. The enzyme catalyses tRNA(Phe) + L-phenylalanine + ATP = L-phenylalanyl-tRNA(Phe) + AMP + diphosphate + H(+). In Roseiflexus castenholzii (strain DSM 13941 / HLO8), this protein is Phenylalanine--tRNA ligase alpha subunit.